The following is a 150-amino-acid chain: UPF0178 protein Maqu_2186 (150 aa).

It belongs to the UPF0178 family.

This Marinobacter nauticus (strain ATCC 700491 / DSM 11845 / VT8) (Marinobacter aquaeolei) protein is UPF0178 protein Maqu_2186.